The sequence spans 92 residues: Small ribosomal subunit protein bS20 (92 aa).

The interval 1–23 (MANTPSAKKRAKQAEKRRSHNAS) is disordered. Basic residues predominate over residues 7–20 (AKKRAKQAEKRRSH).

The protein belongs to the bacterial ribosomal protein bS20 family.

Binds directly to 16S ribosomal RNA. This Pseudomonas fluorescens (strain SBW25) protein is Small ribosomal subunit protein bS20.